A 120-amino-acid chain; its full sequence is Large ribosomal subunit protein uL18 (120 aa).

Belongs to the universal ribosomal protein uL18 family. Part of the 50S ribosomal subunit; part of the 5S rRNA/L5/L18/L25 subcomplex. Contacts the 5S and 23S rRNAs.

Functionally, this is one of the proteins that bind and probably mediate the attachment of the 5S RNA into the large ribosomal subunit, where it forms part of the central protuberance. This chain is Large ribosomal subunit protein uL18, found in Staphylococcus epidermidis (strain ATCC 35984 / DSM 28319 / BCRC 17069 / CCUG 31568 / BM 3577 / RP62A).